We begin with the raw amino-acid sequence, 305 residues long: MSRLQVAAFYAFTPLNEQQRASLLSDLPDMAMTNSVLGSILVAHEGVNGTISGPEAGVEALLQSLRTSLALGCEHFERLEVKRSWADQAVFRRFKARAKKEIVTMGVTSVNPRQNVGTYVDPKDWNDLVDDPDTLVIDTRNSYETAIGSFEGSLDPSTESFRDFPAWAEASLRPLMNDQSPKRIAMFCTGGIRCEKASSYLQSNGFGEVLHLRGGILNYLGEIPEQESRWQGECFVFDQRVALNHQLEPGVHSLCHACGLPLSPSDRADPSYIKGVQCIHCIDRFSESDRARFLMRQQQFDQTPT.

The Rhodanese domain maps to 130–228 (DDPDTLVIDT…YLGEIPEQES (99 aa)). Cysteine 188 acts as the Cysteine persulfide intermediate in catalysis.

Belongs to the TrhO family.

It catalyses the reaction uridine(34) in tRNA + AH2 + O2 = 5-hydroxyuridine(34) in tRNA + A + H2O. Its function is as follows. Catalyzes oxygen-dependent 5-hydroxyuridine (ho5U) modification at position 34 in tRNAs. In Synechococcus sp. (strain CC9902), this protein is tRNA uridine(34) hydroxylase.